A 101-amino-acid polypeptide reads, in one-letter code: YcgL domain-containing protein ACIAD2309 (101 aa).

Residues M1 to D93 enclose the YcgL domain.

In Acinetobacter baylyi (strain ATCC 33305 / BD413 / ADP1), this protein is YcgL domain-containing protein ACIAD2309.